A 1010-amino-acid chain; its full sequence is Signal peptide, CUB and EGF-like domain-containing protein 2 (1010 aa).

A signal peptide spans 1 to 24 (MGAVWTVRLLCLFLLLLNTRQSAA). Residues 28–68 (NTDQCAEGSDACHIDAICQNTPTSYKCTCKTGFKGDGKHCE) enclose the EGF-like 1; calcium-binding domain. Disulfide bonds link cysteine 32–cysteine 45, cysteine 39–cysteine 54, cysteine 56–cysteine 67, cysteine 73–cysteine 85, cysteine 81–cysteine 94, cysteine 96–cysteine 109, cysteine 115–cysteine 126, and cysteine 122–cysteine 135. The 42-residue stretch at 69 to 110 (DIDECDVEYNGGCVHECNNIPGNYRCTCLDGFHLAHDGHNCL) folds into the EGF-like 2; calcium-binding domain. The EGF-like 3; calcium-binding domain maps to 111–147 (DVDECVFNNGGCQHVCVNTMGSYECRCKQGFFLSDNQ). 2 consecutive EGF-like domains span residues 160 to 196 (CMNKEHGCGHICKESPKGGVACECRPGFELAKNQRGC) and 200 to 235 (CNHGNGGCQHICEDTEQGPICRCHVRYMLHADGRTC). A glycan (N-linked (GlcNAc...) asparagine) is linked at asparagine 249. The EGF-like 6 domain occupies 269–304 (CAVNNGGCDSTCKDTSTGVRCSCPVGFTLQPDGKSC). Residues 306-346 (DIDECELHNGGCDHYCRNTIGSFECSCRKGFKLLTDERSCQ) form the EGF-like 7; calcium-binding domain. Intrachain disulfides connect cysteine 310/cysteine 321, cysteine 317/cysteine 330, cysteine 332/cysteine 345, cysteine 351/cysteine 361, cysteine 357/cysteine 370, cysteine 372/cysteine 384, cysteine 390/cysteine 401, cysteine 397/cysteine 410, and cysteine 412/cysteine 425. Residues 347-385 (DIDECFFERTCDHTCVNSPGSFQCVCNKGYTLYGLAHCG) enclose the EGF-like 8; calcium-binding domain. In terms of domain architecture, EGF-like 9; calcium-binding spans 386 to 426 (DINECSFNNGGCEHTCENTMGSFGCHCRAGYKLHWNKKDCI). N-linked (GlcNAc...) asparagine glycans are attached at residues asparagine 488, asparagine 703, asparagine 774, and asparagine 803. Cysteines 822 and 848 form a disulfide. The CUB domain occupies 822–934 (CGGELGEFTG…KGFQVPYVTY (113 aa)). Positions 860 to 869 (ILVVVPEIYL) are interaction with the cholesterol-anchor of SHH. Cysteine 875 and cysteine 896 are oxidised to a cystine. Asparagine 982 carries an N-linked (GlcNAc...) asparagine glycan.

In terms of assembly, interacts with SHH via the cholesterol anchor of the dually lipid-modified SHH (ShhNp). Interacts with PTCH1. Forms homooligomers and heterooligomers with SCUBE1 and SCUBE3. Interacts with VEGFR2. In terms of processing, N-glycosylated.

The protein resides in the secreted. Its subcellular location is the cell surface. Lipid-binding protein required for SHH long-range signaling by binding to the dually lipid-modified SHH (ShhNp) and by promoting ShhNp mobilization, solubilization and release from the cell membrane. Acts by enhancing the proteolytic processing (shedding) of the lipid-modified N- and C- terminal of ShhNp at the cell surface. Synergizes with DISP1 to cause an increase in SHH secretion. Probable cell surface coreceptor for VEGFR2 involved in VEGFR2-mediated angiogenesis. The protein is Signal peptide, CUB and EGF-like domain-containing protein 2 (scube2) of Danio rerio (Zebrafish).